A 508-amino-acid chain; its full sequence is Photosystem II CP47 reaction center protein (508 aa).

Transmembrane regions (helical) follow at residues 21 to 36 (AVHIMHTALVSGWAGS), 101 to 115 (IILSGLLFLAAIWHW), 140 to 156 (GIHLFLSGLLCFGFGAF), 203 to 218 (IAAGILGILAGLFHLS), 237 to 252 (VLSSSIAAVFWAAFVV), and 457 to 472 (NFALLFFFGHIWHGGR).

The protein belongs to the PsbB/PsbC family. PsbB subfamily. As to quaternary structure, PSII is composed of 1 copy each of membrane proteins PsbA, PsbB, PsbC, PsbD, PsbE, PsbF, PsbH, PsbI, PsbJ, PsbK, PsbL, PsbM, PsbT, PsbX, PsbY, PsbZ, Psb30/Ycf12, at least 3 peripheral proteins of the oxygen-evolving complex and a large number of cofactors. It forms dimeric complexes. Binds multiple chlorophylls. PSII binds additional chlorophylls, carotenoids and specific lipids. serves as cofactor.

The protein resides in the plastid. It is found in the chloroplast thylakoid membrane. Its function is as follows. One of the components of the core complex of photosystem II (PSII). It binds chlorophyll and helps catalyze the primary light-induced photochemical processes of PSII. PSII is a light-driven water:plastoquinone oxidoreductase, using light energy to abstract electrons from H(2)O, generating O(2) and a proton gradient subsequently used for ATP formation. The polypeptide is Photosystem II CP47 reaction center protein (Chaetosphaeridium globosum (Charophycean green alga)).